Reading from the N-terminus, the 279-residue chain is Proteasome subunit alpha type-1 (279 aa).

Position 103 is a phosphotyrosine (tyrosine 103). The segment covering histidine 235–asparagine 249 has biased composition (basic and acidic residues). Positions histidine 235–proline 279 are disordered.

It belongs to the peptidase T1A family. In terms of assembly, the 26S proteasome consists of a 20S proteasome core and two 19S regulatory subunits. The 20S proteasome core is composed of 28 subunits that are arranged in four stacked rings, resulting in a barrel-shaped structure. The two end rings are each formed by seven alpha subunits, and the two central rings are each formed by seven beta subunits. The catalytic chamber with the active sites is on the inside of the barrel. Interacts with PI31.

The protein resides in the cytoplasm. The protein localises to the nucleus. Functionally, the proteasome is a multicatalytic proteinase complex which is characterized by its ability to cleave peptides with Arg, Phe, Tyr, Leu, and Glu adjacent to the leaving group at neutral or slightly basic pH. The proteasome has an ATP-dependent proteolytic activity. The chain is Proteasome subunit alpha type-1 (Prosalpha6) from Drosophila melanogaster (Fruit fly).